We begin with the raw amino-acid sequence, 101 residues long: Large ribosomal subunit protein bL28 (101 aa).

This sequence belongs to the bacterial ribosomal protein bL28 family.

The polypeptide is Large ribosomal subunit protein bL28 (Rhodopseudomonas palustris (strain BisB18)).